Consider the following 698-residue polypeptide: tRNA (guanine(37)-N(1))-methyltransferase (698 aa).

Residues aspartate 233–glycine 254 form a disordered region. A compositionally biased stretch (basic and acidic residues) spans serine 234 to threonine 247. S-adenosyl-L-methionine-binding positions include arginine 394, aspartate 432 to isoleucine 433, and aspartate 459 to alanine 460. 2 disordered regions span residues proline 500–aspartate 522 and lysine 534–arginine 582. Composition is skewed to basic and acidic residues over residues arginine 513–aspartate 522, histidine 539–proline 550, and threonine 569–arginine 582. Residue asparagine 603 participates in S-adenosyl-L-methionine binding.

This sequence belongs to the class I-like SAM-binding methyltransferase superfamily. TRM5/TYW2 family. As to quaternary structure, monomer.

Its subcellular location is the mitochondrion matrix. It is found in the nucleus. The protein resides in the cytoplasm. The enzyme catalyses guanosine(37) in tRNA + S-adenosyl-L-methionine = N(1)-methylguanosine(37) in tRNA + S-adenosyl-L-homocysteine + H(+). Its function is as follows. Specifically methylates the N1 position of guanosine-37 in various cytoplasmic and mitochondrial tRNAs. Methylation is not dependent on the nature of the nucleoside 5' of the target nucleoside. This is the first step in the biosynthesis of wybutosine (yW), a modified base adjacent to the anticodon of tRNAs and required for accurate decoding. This Plasmodium knowlesi (strain H) protein is tRNA (guanine(37)-N(1))-methyltransferase.